Here is a 269-residue protein sequence, read N- to C-terminus: MNYRKIWIDANGPIPKDSDGRTDEIHHKDGNRENNDLDNLMCLSIQEHYDIHLAQKDYQACHAIKLRMKYSPEEISELASKAAKSREIQIFNIPEVRAKNIASIKSKIENGTFHLLDGEIQRKSNLNRVALGIHNFQQAEHIAKVKERNIAAIKEGTHVFCGGKMQSETQSKRVNDGSHHFLSEDHKKRTSAKTLEMVKNGTHPAQKEITCDFCGHIGKGPGFYLKHNDRCKLNPNRIQLNCPYCDKKDLSPSTYKRWHGDNCKARFND.

Its function is as follows. This endonuclease is specific to the nrdB gene splice junction and is involved in intron homing. This Enterobacteria phage RB3 (Bacteriophage RB3) protein is Intron-associated endonuclease 3 (ITEVIIIR).